A 344-amino-acid polypeptide reads, in one-letter code: Calcium homeostasis modulator protein 3 (344 aa).

The Cytoplasmic segment spans residues 1-20 (MDKFRMLFQHFQSSSESVMN). Positions 9–36 (QHFQSSSESVMNGICLLLAAVTVKLYSS) are central pore. A helical membrane pass occupies residues 21-36 (GICLLLAAVTVKLYSS). At 37–48 (FDFNCPCLVHYN) the chain is on the extracellular side. 2 cysteine pairs are disulfide-bonded: C41–C126 and C43–C157. The chain crosses the membrane as a helical span at residues 49–71 (ALYGLGLLLTPPLALFLCGLLAN). Residues 72–98 (RQSVVMVEEWRRPAGHRRKDPGIIRYM) lie on the Cytoplasmic side of the membrane. A lipid anchor (S-palmitoyl cysteine) is attached at C99. The helical transmembrane segment at 99 to 124 (CSSVLQRALAAPLVWILLALLDGKCF) threads the bilayer. Residues 125 to 176 (VCAFSSSVDPEKFLDFANMTPSQVQLFLAKVPCKEDELVRDSPARKAVSRYL) lie on the Extracellular side of the membrane. A glycan (N-linked (GlcNAc...) asparagine) is linked at N142. A helical membrane pass occupies residues 177-202 (RCLSQAIGWSVTLLLIIAAFLARCLR). S-palmitoyl cysteine attachment occurs at residues C200 and C204. The Cytoplasmic segment spans residues 203-344 (PCFDQTVFLQ…GTRLSQHTDV (142 aa)).

It belongs to the CALHM family. In terms of assembly, associates with CALHM1 as a pore-forming subunit in a hetero-hexameric channel complex. N-glycosylated. Post-translationally, palmitoylated by ZDHHC3 and ZDHHC15. Palmitoylation positively regulates CALHM1:CALHM3 channel conductance. Specifically expressed in circumvallate taste bud cells.

The protein resides in the basolateral cell membrane. The enzyme catalyses ATP(in) = ATP(out). It catalyses the reaction Ca(2+)(in) = Ca(2+)(out). The catalysed reaction is Na(+)(in) = Na(+)(out). It carries out the reaction K(+)(in) = K(+)(out). The enzyme catalyses chloride(in) = chloride(out). Its function is as follows. Pore-forming subunit of gustatory voltage-gated ion channels required for sensory perception of sweet, bitter and umami tastes. With CALHM1 forms a fast-activating voltage-gated ATP-release channel in type II taste bud cells, ATP acting as a neurotransmitter to activate afferent neural gustatory pathways. Acts both as a voltage-gated and calcium-activated ion channel: mediates neuronal excitability in response to membrane depolarization and low extracellular Ca(2+) concentration. Has poor ion selectivity and forms a wide pore (around 14 Angstroms) that mediates permeation of small ions including Ca(2+), Na(+), K(+) and Cl(-), as well as larger ions such as ATP(4-). This Homo sapiens (Human) protein is Calcium homeostasis modulator protein 3.